A 901-amino-acid polypeptide reads, in one-letter code: HTH-type transcriptional regulator MalT (901 aa).

39–46 (SPAGYGKT) lines the ATP pocket. One can recognise an HTH luxR-type domain in the interval 829–894 (ELIRTSPLTQ…AAVQHAQKLL (66 aa)). Positions 853 to 872 (NEQIAGELEVAATTIKTHIR) form a DNA-binding region, H-T-H motif.

Belongs to the MalT family. In terms of assembly, monomer in solution. Oligomerizes to an active state in the presence of the positive effectors ATP and maltotriose.

With respect to regulation, activated by ATP and maltotriose, which are both required for DNA binding. Its function is as follows. Positively regulates the transcription of the maltose regulon whose gene products are responsible for uptake and catabolism of malto-oligosaccharides. Specifically binds to the promoter region of its target genes, recognizing a short DNA motif called the MalT box. This chain is HTH-type transcriptional regulator MalT, found in Escherichia coli O127:H6 (strain E2348/69 / EPEC).